Consider the following 291-residue polypeptide: Putative fatty acid elongase 4 (291 aa).

Helical transmembrane passes span 46-66 (ILFQKYWYHSITISVLYFILI), 79-99 (FTLKYPLILWNGALAAFSIIA), and 254-274 (NLYLAFVIYVTFAILFIQFFV).

Belongs to the ELO family.

It localises to the membrane. It catalyses the reaction a very-long-chain acyl-CoA + malonyl-CoA + H(+) = a very-long-chain 3-oxoacyl-CoA + CO2 + CoA. It participates in lipid metabolism; fatty acid biosynthesis. Its function is as follows. Could be implicated in synthesis of very long chain fatty acids. This chain is Putative fatty acid elongase 4 (elo-4), found in Caenorhabditis elegans.